The following is a 70-amino-acid chain: U2-agatoxin-Ao1r (70 aa).

The signal sequence occupies residues 1-20; that stretch reads MRSIISLILISAMVFSMIAP. Positions 21 to 34 are excised as a propeptide; sequence VPEEERLQLSEDER. 3 cysteine pairs are disulfide-bonded: Cys37-Cys53, Cys44-Cys58, and Cys52-Cys68. Leu69 is subject to Leucine amide.

It belongs to the neurotoxin 01 (U2-agtx) family. As to expression, expressed by the venom gland.

It localises to the secreted. In terms of biological role, insect active toxin causing rapid but reversible paralysis in crickets. No activity shown in mammals. Does not show effect on mammalian voltage-gated calcium channels. In Agelena orientalis (Funnel-web spider), this protein is U2-agatoxin-Ao1r.